Reading from the N-terminus, the 481-residue chain is Flavonol 3-O-glucosyltransferase UGT71C1 (481 aa).

The active-site Proton acceptor is histidine 19. Histidine 19 lines the an anthocyanidin pocket. The active-site Charge relay is aspartate 131. UDP-alpha-D-glucose is bound by residues threonine 153, alanine 352, glutamine 354, histidine 369, tryptophan 372, asparagine 373, serine 374, and glutamate 377. Alanine 392 contacts an anthocyanidin. UDP-alpha-D-glucose contacts are provided by glutamate 393 and glutamine 394.

It belongs to the UDP-glycosyltransferase family.

It carries out the reaction a flavonol + UDP-alpha-D-glucose = a flavonol 3-O-beta-D-glucoside + UDP + H(+). The enzyme catalyses a 7-O-hydroxy-flavonol + UDP-alpha-D-glucose = a flavonol 7-O-beta-D-glucoside + UDP + H(+). Its function is as follows. Possesses quercetin 7-O-glucosyltransferase and 3'-O-glucosyltransferase activities in vitro. Also active in vitro on benzoates and benzoate derivatives. Glucosylates other secondary metabolites in vitro like trans-resveratrol, curcumin, vanillin and etoposide. This chain is Flavonol 3-O-glucosyltransferase UGT71C1, found in Arabidopsis thaliana (Mouse-ear cress).